A 117-amino-acid polypeptide reads, in one-letter code: Biogenesis of lysosome-related organelles complex 1 subunit BLS1 (117 aa).

Positions 97–117 (EGKAQDTEQAPGKGDRIFRSD) are disordered.

Belongs to the BLOC1S1 family. As to quaternary structure, component of the biogenesis of lysosome-related organelles complex-1 (BLOC-1).

The protein resides in the endosome. Its function is as follows. Component of the biogenesis of lysosome-related organelles complex-1 (BLOC-1), a complex involved in endosomal cargo sorting. This Eremothecium gossypii (strain ATCC 10895 / CBS 109.51 / FGSC 9923 / NRRL Y-1056) (Yeast) protein is Biogenesis of lysosome-related organelles complex 1 subunit BLS1 (BLS1).